A 123-amino-acid polypeptide reads, in one-letter code: ATP synthase epsilon chain (123 aa).

The protein belongs to the ATPase epsilon chain family. F-type ATPases have 2 components, CF(1) - the catalytic core - and CF(0) - the membrane proton channel. CF(1) has five subunits: alpha(3), beta(3), gamma(1), delta(1), epsilon(1). CF(0) has three main subunits: a, b and c.

It localises to the cell inner membrane. Its function is as follows. Produces ATP from ADP in the presence of a proton gradient across the membrane. The polypeptide is ATP synthase epsilon chain (Helicobacter pylori (strain Shi470)).